A 245-amino-acid polypeptide reads, in one-letter code: AA9 family lytic polysaccharide monooxygenase B (245 aa).

Residues 1–18 (MKSAIFAAAVLGAAGVSA) form the signal peptide. His19 and His105 together coordinate Cu(2+). Cys116 and Cys120 are joined by a disulfide. Residues His179 and Gln188 each contribute to the O2 site. Tyr190 lines the Cu(2+) pocket.

The protein belongs to the polysaccharide monooxygenase AA9 family. It depends on Cu(2+) as a cofactor.

It localises to the secreted. It catalyses the reaction [(1-&gt;4)-beta-D-glucosyl]n+m + reduced acceptor + O2 = 4-dehydro-beta-D-glucosyl-[(1-&gt;4)-beta-D-glucosyl]n-1 + [(1-&gt;4)-beta-D-glucosyl]m + acceptor + H2O.. Its function is as follows. Lytic polysaccharide monooxygenase (LPMO) that depolymerizes crystalline and amorphous polysaccharides via the oxidation of scissile alpha- or beta-(1-4)-glycosidic bonds, yielding C1 or C4 oxidation products. Catalysis by LPMOs requires the reduction of the active-site copper from Cu(II) to Cu(I) by a reducing agent and H(2)O(2) or O(2) as a cosubstrate. Active on hemicelluloses, including xylan, glucomannan, and xyloglucan. Has no activity on ivory nut mannan (INM), a linear beta-1,4-linked mannan without substitutions. This is AA9 family lytic polysaccharide monooxygenase B from Malbranchea cinnamomea (Thermophilic fungus).